Reading from the N-terminus, the 1222-residue chain is BOS complex subunit NOMO3 (1222 aa).

The N-terminal stretch at 1–31 (MLVGQGAGPLGPAVVTAAVVLLLSGVGPAHG) is a signal peptide. The Extracellular segment spans residues 32–1155 (SEDIVVGCGG…NPTRKLPEQD (1124 aa)). 3 N-linked (GlcNAc...) asparagine glycosylation sites follow: Asn-50, Asn-218, and Asn-618. Residues 1156-1176 (IAQGSYIALPLTLLVLLAGYN) traverse the membrane as a helical segment. The Cytoplasmic portion of the chain corresponds to 1177-1222 (HDKLIPLLLQLTSRLQGVGALGQAASDNSGPEDAKRQAKKQKTRRT). A disordered region spans residues 1198–1222 (GQAASDNSGPEDAKRQAKKQKTRRT). The span at 1213 to 1222 (QAKKQKTRRT) shows a compositional bias: basic residues.

As to quaternary structure, component of the back of Sec61 (BOS) complex, composed of NCLN/Nicalin, NOMO (NOMO1, NOMO2 or NOMO3) and TMEM147. The BOS complex is part of the multi-pass translocon (MPT) complex, composed of three subcomplexes, the GEL complex (composed of RAB5IF/OPTI and TMCO1), the BOS complex (composed of NCLN/Nicalin, NOMO and TMEM147) and the PAT complex (composed of WDR83OS/Asterix and CCDC47). The MPT complex associates with the SEC61 complex. Due to the strong similarity between NOMO1, NOMO2 and NOMO3, similar interaction pattern probably occur for the three gene copies.

The protein localises to the endoplasmic reticulum membrane. Functionally, component of the multi-pass translocon (MPT) complex that mediates insertion of multi-pass membrane proteins into the lipid bilayer of membranes. The MPT complex takes over after the SEC61 complex: following membrane insertion of the first few transmembrane segments of proteins by the SEC61 complex, the MPT complex occludes the lateral gate of the SEC61 complex to promote insertion of subsequent transmembrane regions. The chain is BOS complex subunit NOMO3 (NOMO3) from Homo sapiens (Human).